Here is a 349-residue protein sequence, read N- to C-terminus: GTPase Obg (349 aa).

An Obg domain is found at 1–159 (MKFLDEAKVY…RWIWLRLKLI (159 aa)). Residues 160-327 (ADAGLVGLPN…ALRALVAVIG (168 aa)) enclose the OBG-type G domain. Residues 166–173 (GLPNAGKS), 191–195 (FTTLH), 212–215 (DIPG), 279–282 (NKID), and 308–310 (SGV) contribute to the GTP site. 2 residues coordinate Mg(2+): S173 and T193.

The protein belongs to the TRAFAC class OBG-HflX-like GTPase superfamily. OBG GTPase family. In terms of assembly, monomer. Requires Mg(2+) as cofactor.

It is found in the cytoplasm. In terms of biological role, an essential GTPase which binds GTP, GDP and possibly (p)ppGpp with moderate affinity, with high nucleotide exchange rates and a fairly low GTP hydrolysis rate. Plays a role in control of the cell cycle, stress response, ribosome biogenesis and in those bacteria that undergo differentiation, in morphogenesis control. This is GTPase Obg from Rhodopseudomonas palustris (strain BisA53).